The following is a 503-amino-acid chain: ATP synthase subunit alpha (503 aa).

Glycine 169 to threonine 176 contacts ATP.

It belongs to the ATPase alpha/beta chains family. F-type ATPases have 2 components, CF(1) - the catalytic core - and CF(0) - the membrane proton channel. CF(1) has five subunits: alpha(3), beta(3), gamma(1), delta(1), epsilon(1). CF(0) has three main subunits: a(1), b(2) and c(9-12). The alpha and beta chains form an alternating ring which encloses part of the gamma chain. CF(1) is attached to CF(0) by a central stalk formed by the gamma and epsilon chains, while a peripheral stalk is formed by the delta and b chains.

Its subcellular location is the cell membrane. The catalysed reaction is ATP + H2O + 4 H(+)(in) = ADP + phosphate + 5 H(+)(out). In terms of biological role, produces ATP from ADP in the presence of a proton gradient across the membrane. The alpha chain is a regulatory subunit. The polypeptide is ATP synthase subunit alpha (Lactobacillus delbrueckii subsp. bulgaricus (strain ATCC BAA-365 / Lb-18)).